A 132-amino-acid polypeptide reads, in one-letter code: MDVTRLLLATLLVFLCFFTAYSHPPPEEKLRDDRSLRSNSSVNLLDFPSVSIVALNKNSKQISRKEAEKKRSSKKEASMKKVARPRTPLSAPCVATRDSCKPPAPACCDPCAFCQCRFFRSACSCRVLSLNC.

A signal peptide spans 1-22 (MDVTRLLLATLLVFLCFFTAYS). N-linked (GlcNAc...) asparagine glycosylation occurs at Asn39. The disordered stretch occupies residues 61–87 (QISRKEAEKKRSSKKEASMKKVARPRT). Residues 63–79 (SRKEAEKKRSSKKEASM) are compositionally biased toward basic and acidic residues. 5 disulfide bridges follow: Cys93–Cys108, Cys100–Cys114, Cys107–Cys125, Cys111–Cys132, and Cys116–Cys123. Residues 93-132 (CVATRDSCKPPAPACCDPCAFCQCRFFRSACSCRVLSLNC) form the Agouti domain.

The protein resides in the secreted. Its function is as follows. Involved in the regulation of melanogenesis. The binding of ASP to MC1R precludes alpha-MSH initiated signaling and thus blocks production of cAMP, leading to a down-regulation of eumelanogenesis (brown/black pigment) and thus increasing synthesis of pheomelanin (yellow/red pigment). The polypeptide is Agouti-signaling protein (ASIP) (Macaca hecki (Heck's macaque)).